Here is a 502-residue protein sequence, read N- to C-terminus: Lysine--tRNA ligase (502 aa).

Residues Glu-403 and Glu-410 each contribute to the Mg(2+) site.

It belongs to the class-II aminoacyl-tRNA synthetase family. Homodimer. It depends on Mg(2+) as a cofactor.

It is found in the cytoplasm. It carries out the reaction tRNA(Lys) + L-lysine + ATP = L-lysyl-tRNA(Lys) + AMP + diphosphate. This is Lysine--tRNA ligase from Parasynechococcus marenigrum (strain WH8102).